Reading from the N-terminus, the 167-residue chain is Transcription factor 24 (167 aa).

Positions 1-23 (MDRGRPAGSPLSASAEPAPLAAA) are enriched in low complexity. Residues 1 to 60 (MDRGRPAGSPLSASAEPAPLAAAIRDSRPGRTGPGPAGPGGGSRSGSGRPAAANAARERS) form a disordered region. A compositionally biased stretch (gly residues) spans 32 to 45 (TGPGPAGPGGGSRS). Over residues 46–55 (GSGRPAAANA) the composition is skewed to low complexity. Residues 49–101 (RPAAANAARERSRVQTLRHAFLELQRTLPSVPPDTKLSKLDVLLLATTYIAHL) enclose the bHLH domain.

As to quaternary structure, efficient DNA binding requires dimerization with another bHLH protein.

Its subcellular location is the nucleus. Putative transcription factor. The chain is Transcription factor 24 (TCF24) from Homo sapiens (Human).